The primary structure comprises 334 residues: Nucleoid-associated protein YPK_2796 (334 aa).

Belongs to the YejK family.

The protein resides in the cytoplasm. The protein localises to the nucleoid. This is Nucleoid-associated protein YPK_2796 from Yersinia pseudotuberculosis serotype O:3 (strain YPIII).